Reading from the N-terminus, the 83-residue chain is Small ribosomal subunit protein bS16 (83 aa).

Belongs to the bacterial ribosomal protein bS16 family.

The sequence is that of Small ribosomal subunit protein bS16 from Azoarcus sp. (strain BH72).